A 571-amino-acid polypeptide reads, in one-letter code: Adenine deaminase (571 aa).

The protein belongs to the metallo-dependent hydrolases superfamily. Adenine deaminase family. Mn(2+) is required as a cofactor.

It carries out the reaction adenine + H2O + H(+) = hypoxanthine + NH4(+). This Dehalococcoides mccartyi (strain ATCC BAA-2266 / KCTC 15142 / 195) (Dehalococcoides ethenogenes (strain 195)) protein is Adenine deaminase.